Reading from the N-terminus, the 86-residue chain is Co-chaperonin GroES (86 aa).

The protein belongs to the GroES chaperonin family. Heptamer of 7 subunits arranged in a ring. Interacts with the chaperonin GroEL.

It localises to the cytoplasm. Its function is as follows. Together with the chaperonin GroEL, plays an essential role in assisting protein folding. The GroEL-GroES system forms a nano-cage that allows encapsulation of the non-native substrate proteins and provides a physical environment optimized to promote and accelerate protein folding. GroES binds to the apical surface of the GroEL ring, thereby capping the opening of the GroEL channel. The protein is Co-chaperonin GroES of Campylobacter jejuni subsp. doylei (strain ATCC BAA-1458 / RM4099 / 269.97).